A 193-amino-acid polypeptide reads, in one-letter code: Mesogenin-1 (193 aa).

Positions 34–59 are disordered; it reads GPFELNQASPSQSLSPAPSLESYSSS. Residues 40 to 59 are compositionally biased toward low complexity; the sequence is QASPSQSLSPAPSLESYSSS. Positions 124 to 178 constitute a bHLH domain; sequence QRRRKASEREKLRMRTLADALHTLRNYLPPVYSQRGQPLTKIQTLKYTIKYIGEL.

It is found in the nucleus. Its function is as follows. Involved in specifying the paraxial, but not dorsal, mesoderm. May regulate the expression of T-box transcription factors required for mesoderm formation and differentiation. The protein is Mesogenin-1 (MSGN1) of Homo sapiens (Human).